A 248-amino-acid polypeptide reads, in one-letter code: Methionine aminopeptidase 1 (248 aa).

Residue His77 participates in substrate binding. Asp94, Asp105, and His168 together coordinate a divalent metal cation. His175 is a substrate binding site. A divalent metal cation contacts are provided by Glu201 and Glu232.

In terms of assembly, monomer. Requires Co(2+) as cofactor. Zn(2+) is required as a cofactor. The cofactor is Mn(2+). It depends on Fe(2+) as a cofactor.

The protein localises to the cytoplasm. The enzyme catalyses Release of N-terminal amino acids, preferentially methionine, from peptides and arylamides.. Removes the N-terminal methionine from nascent proteins. The N-terminal methionine is often cleaved when the second residue in the primary sequence is small and uncharged (Met-Ala-, Cys, Gly, Pro, Ser, Thr, or Val). Requires deformylation of the N(alpha)-formylated initiator methionine before it can be hydrolyzed. The polypeptide is Methionine aminopeptidase 1 (Bacillus subtilis (strain 168)).